Reading from the N-terminus, the 423-residue chain is MVPHLLLLCLLPLVRATEPHEGRADEQSAEAALAVPNASHFFSWNNYTFSDWQNFVGRRRYGAESQNPTVKALLIVAYSFIIVFSLFGNVLVCHVIFKNQRMHSATSLFIVNLAVADIMITLLNTPFTLVRFVNSTWIFGKGMCHVSRFAQYCSLHVSALTLTAIAVDRHQVIMHPLKPRISITKGVIYIAVIWTMATFFSLPHAICQKLFTFKYSEDIVRSLCLPDFPEPADLFWKYLDLATFILLYILPLLIISVAYARVAKKLWLCNMIGDVTTEQYFALRRKKKKTIKMLMLVVVLFALCWFPLNCYVLLLSSKVIRTNNALYFAFHWFAMSSTCYNPFIYCWLNENFRIELKALLSMCQRPPKPQEDRPPSPVPSFRVAWTEKNDGQRAPLANNLLPTSQLQSGKTDLSSVEPIVTMS.

The signal sequence occupies residues Met1–Ala16. At Glu18–Lys71 the chain is on the extracellular side. N-linked (GlcNAc...) asparagine glycosylation is found at Asn37 and Asn46. Residues Ala72–Val92 traverse the membrane as a helical segment. Residues Cys93–Ser107 are Cytoplasmic-facing. The helical transmembrane segment at Leu108–Leu129 threads the bilayer. Over Val130–His145 the chain is Extracellular. Asn134 carries an N-linked (GlcNAc...) asparagine glycan. A disulfide bridge links Cys144 with Cys224. A helical transmembrane segment spans residues Val146 to Val167. The Cytoplasmic segment spans residues Asp168–Gly186. The chain crosses the membrane as a helical span at residues Val187–Gln208. The Extracellular portion of the chain corresponds to Lys209 to Tyr238. The chain crosses the membrane as a helical span at residues Leu239–Ala260. At Arg261–Met293 the chain is on the cytoplasmic side. Residues Leu294–Leu315 traverse the membrane as a helical segment. Topologically, residues Ser316–Tyr327 are extracellular. A helical membrane pass occupies residues Phe328–Leu348. Over Asn349–Ser423 the chain is Cytoplasmic. Positions Pro402 to Ser414 are enriched in polar residues. A disordered region spans residues Pro402–Ser423.

It belongs to the G-protein coupled receptor 1 family. Highly expressed in the brain and spinal cord, and found in lower concentrations in the thymus and other tissues.

It is found in the cell membrane. Its function is as follows. G-protein coupled receptor for PEN, a neuropeptide produced from the precursor protein, proSAAS (encoded by PCSK1N). Acts through a G(i)- and G(q)-alpha-alpha-mediated pathway in response to PEN. Plays a role in food intake and body weight regulation. May contribute to the regulation of anxiety-related behaviors. This chain is G-protein coupled receptor 83, found in Homo sapiens (Human).